The sequence spans 293 residues: Pyridoxal 5'-phosphate synthase subunit PdxS (293 aa).

Residue Asp-25 participates in D-ribose 5-phosphate binding. The Schiff-base intermediate with D-ribose 5-phosphate role is filled by Lys-82. Residue Gly-154 coordinates D-ribose 5-phosphate. Arg-166 contacts D-glyceraldehyde 3-phosphate. D-ribose 5-phosphate contacts are provided by residues Gly-215 and 236 to 237; that span reads GS.

The protein belongs to the PdxS/SNZ family. In terms of assembly, in the presence of PdxT, forms a dodecamer of heterodimers.

It catalyses the reaction aldehydo-D-ribose 5-phosphate + D-glyceraldehyde 3-phosphate + L-glutamine = pyridoxal 5'-phosphate + L-glutamate + phosphate + 3 H2O + H(+). It participates in cofactor biosynthesis; pyridoxal 5'-phosphate biosynthesis. Functionally, catalyzes the formation of pyridoxal 5'-phosphate from ribose 5-phosphate (RBP), glyceraldehyde 3-phosphate (G3P) and ammonia. The ammonia is provided by the PdxT subunit. Can also use ribulose 5-phosphate and dihydroxyacetone phosphate as substrates, resulting from enzyme-catalyzed isomerization of RBP and G3P, respectively. This chain is Pyridoxal 5'-phosphate synthase subunit PdxS, found in Thermotoga petrophila (strain ATCC BAA-488 / DSM 13995 / JCM 10881 / RKU-1).